The chain runs to 201 residues: Pyridoxal 5'-phosphate synthase subunit PdxT (201 aa).

50-52 (GES) is a binding site for L-glutamine. Cysteine 82 serves as the catalytic Nucleophile. L-glutamine-binding positions include arginine 115 and 143 to 144 (IR). Residues histidine 179 and glutamate 181 each act as charge relay system in the active site.

It belongs to the glutaminase PdxT/SNO family. As to quaternary structure, in the presence of PdxS, forms a dodecamer of heterodimers. Only shows activity in the heterodimer.

The catalysed reaction is aldehydo-D-ribose 5-phosphate + D-glyceraldehyde 3-phosphate + L-glutamine = pyridoxal 5'-phosphate + L-glutamate + phosphate + 3 H2O + H(+). It catalyses the reaction L-glutamine + H2O = L-glutamate + NH4(+). The protein operates within cofactor biosynthesis; pyridoxal 5'-phosphate biosynthesis. Its function is as follows. Catalyzes the hydrolysis of glutamine to glutamate and ammonia as part of the biosynthesis of pyridoxal 5'-phosphate. The resulting ammonia molecule is channeled to the active site of PdxS. The chain is Pyridoxal 5'-phosphate synthase subunit PdxT from Deinococcus geothermalis (strain DSM 11300 / CIP 105573 / AG-3a).